Reading from the N-terminus, the 933-residue chain is MLKALFGDPNTRKIKKLQPIVAEINLLEEDIQHLSDEQLKEKTVEFREMLDKANNDEELEDILEEILPDAFAVVREAAKRVLGMRHFDVQLMGGMVLHQGQIAEMKTGEGKTLVATLPAYLNGLTSRGVHIVTVNDYLARRDAEWMGQVHRFLGLTVGLIQSGMNPEERKKNYACDVTYTTNSELGFDYLRDNMATAMAEVVQRPPNYCIIDEVDSILIDEARTPLIISGQVERPTEKYIKAAEIAKQLEKQESEEDPKDYEVDEKARNVLMTDQGFEKAEQLLGVGDLYDQENPWAHYIFNAIKAKELFTKDVNYIVKNKEVVIVDEFTGRVLAGRRWSDGLHQAIEAKEGVPIQRETQTLATITYQNFFLLYNKLSGMTGTAKTEETELEKVYNLQVTIVPTNRPSQRYDFPDVVYKTEPAKWKAVAAEVEEMHKMGRPILVGTTSVEKSEVISALLQQSNIPHNILNARPENVERESEIVAQAGRKGAVTIATNMAGRGTDIILGGNSDYMARLKIREYLMPQIVMPEDDNLMAGGMGSNNRRPQGFGQDSKKKKWQPSADIFPTDLSPETQNMLKEAVKFAVDQYGQQSLSELEAEEKIAIASENAPTDDPVIEKLREVYKLIRKQYDAFTDKEHDEVVDKGGLHVIATERHESRRIDNQLRGRAGRQGDPGSTKFFLSLEDNLLRIFGGDRVAGLMNAFRVEEDMPIESKMLTRSLEGAQKKVETFYYDTRKQVFEYDEVMNNQRRAIYAERRRVLEGLDLKEQVLQYAEKTMDEIVDAYVNPELPPEEWDVENLVSKVKEFVYLLEDITAKDMEDMTVAEMKIFLHEEVRKAYDIKEDQVDKVRPGLMREAERFFILQQIDTLWREHLQSMDALRESIGLRGYGQKDPLIEYKQEGYEMFLEMMIDIRRNVVYSLFQFQPQGQPQAV.

ATP-binding positions include Gln90, 108-112, and Asp504; that span reads GEGKT. Residues 539–570 form a disordered region; sequence GMGSNNRRPQGFGQDSKKKKWQPSADIFPTDL.

It belongs to the SecA family. Monomer and homodimer. Part of the essential Sec protein translocation apparatus which comprises SecA, SecYEG and auxiliary proteins SecDF. Other proteins may also be involved.

Its subcellular location is the cell inner membrane. It localises to the cellular thylakoid membrane. The protein localises to the cytoplasm. The catalysed reaction is ATP + H2O + cellular proteinSide 1 = ADP + phosphate + cellular proteinSide 2.. In terms of biological role, part of the Sec protein translocase complex. Interacts with the SecYEG preprotein conducting channel. Has a central role in coupling the hydrolysis of ATP to the transfer of proteins into and across the cell membrane, serving as an ATP-driven molecular motor driving the stepwise translocation of polypeptide chains across the membrane. Its function is as follows. Probably participates in protein translocation into and across both the cytoplasmic and thylakoid membranes in cyanobacterial cells. This Crocosphaera subtropica (strain ATCC 51142 / BH68) (Cyanothece sp. (strain ATCC 51142)) protein is Protein translocase subunit SecA.